Here is a 124-residue protein sequence, read N- to C-terminus: CRISPR-associated endoribonuclease Cas2 4 (124 aa).

Aspartate 40 provides a ligand contact to Mg(2+).

The protein belongs to the CRISPR-associated endoribonuclease Cas2 protein family. As to quaternary structure, homodimer, forms a heterotetramer with a Cas1 homodimer. Mg(2+) is required as a cofactor.

Functionally, CRISPR (clustered regularly interspaced short palindromic repeat), is an adaptive immune system that provides protection against mobile genetic elements (viruses, transposable elements and conjugative plasmids). CRISPR clusters contain sequences complementary to antecedent mobile elements and target invading nucleic acids. CRISPR clusters are transcribed and processed into CRISPR RNA (crRNA). Functions as a ssRNA-specific endoribonuclease. Involved in the integration of spacer DNA into the CRISPR cassette. The protein is CRISPR-associated endoribonuclease Cas2 4 of Rhodospirillum rubrum (strain ATCC 11170 / ATH 1.1.1 / DSM 467 / LMG 4362 / NCIMB 8255 / S1).